The following is a 136-amino-acid chain: Protein NrdI (136 aa).

This sequence belongs to the NrdI family.

Its function is as follows. Probably involved in ribonucleotide reductase function. This Escherichia coli O7:K1 (strain IAI39 / ExPEC) protein is Protein NrdI.